Reading from the N-terminus, the 558-residue chain is D-xylose-proton symporter-like 3, chloroplastic (558 aa).

A chloroplast-targeting transit peptide spans 1-31 (MAFAVSVQSHFAIRALKRDHFKNPSPRTFCS). Helical transmembrane passes span 98 to 118 (VILP…DIGA), 146 to 166 (LVVS…YGVA), 175 to 195 (LIIA…APDL), 197 to 217 (ILLV…HGAP), 238 to 258 (LFIV…IDVV), 264 to 284 (MYGF…SLPA), 359 to 379 (ALTI…PSVL), 400 to 420 (VSVI…AKVD), 426 to 446 (PLLI…SAYY), 449 to 469 (LGGF…CYQI), 491 to 511 (GISL…FAFS), and 522 to 542 (LFLL…LVVP).

Belongs to the major facilitator superfamily. Sugar transporter (TC 2.A.1.1) family.

It localises to the plastid. Its subcellular location is the chloroplast membrane. This is D-xylose-proton symporter-like 3, chloroplastic from Arabidopsis thaliana (Mouse-ear cress).